The sequence spans 107 residues: MKVTDVRLRKIQTDGRMKALVSITLDDAFVVHDLRVIEGNSGLFVAMPSKRTPDGEFRDIAHPINSDMRQEIQDAVMKVYDETDEVIPDKNAQPSSDSEDNGSEEEA.

The segment at 82–107 (ETDEVIPDKNAQPSSDSEDNGSEEEA) is disordered. The span at 97–107 (DSEDNGSEEEA) shows a compositional bias: acidic residues.

Belongs to the SpoVG family.

Its function is as follows. Could be involved in septation. This is Putative septation protein SpoVG from Staphylococcus carnosus (strain TM300).